A 355-amino-acid chain; its full sequence is DNA polymerase IV (355 aa).

The region spanning 7-188 is the UmuC domain; that stretch reads IIHIDMDCFY…LPVRKLFGVG (182 aa). Residues Asp11 and Asp106 each coordinate Mg(2+). Glu107 is a catalytic residue.

Belongs to the DNA polymerase type-Y family. In terms of assembly, monomer. Mg(2+) serves as cofactor.

It is found in the cytoplasm. The catalysed reaction is DNA(n) + a 2'-deoxyribonucleoside 5'-triphosphate = DNA(n+1) + diphosphate. Its function is as follows. Poorly processive, error-prone DNA polymerase involved in untargeted mutagenesis. Copies undamaged DNA at stalled replication forks, which arise in vivo from mismatched or misaligned primer ends. These misaligned primers can be extended by PolIV. Exhibits no 3'-5' exonuclease (proofreading) activity. May be involved in translesional synthesis, in conjunction with the beta clamp from PolIII. The chain is DNA polymerase IV from Legionella pneumophila (strain Paris).